The primary structure comprises 345 residues: RING finger protein 228 (345 aa).

Residues 1-21 (MAAPASDSGGSQQSPSSSPGS) are compositionally biased toward low complexity. Residues 1–43 (MAAPASDSGGSQQSPSSSPGSREGAGVAAKGAPDCGDAGARDA) are disordered. The RING-type zinc-finger motif lies at 58–125 (CKICYNYFDA…PGAIACPVCR (68 aa)). The tract at residues 159 to 213 (LPQDRLPPLPARLPAPAAAPPPTPAPPPPPSPAPPQPPPPPPAEDAAPGPRARPG) is disordered. The segment covering 163–201 (RLPPLPARLPAPAAAPPPTPAPPPPPSPAPPQPPPPPPA) has biased composition (pro residues). Positions 202-213 (EDAAPGPRARPG) are enriched in low complexity. The next 2 helical transmembrane spans lie at 236 to 256 (VCVV…LIFV) and 290 to 310 (LSVA…ICWL). Positions 319 to 345 (AGSTGGSGGGGGPRARAAAGGARRSDT) are disordered. The span at 321-331 (STGGSGGGGGP) shows a compositional bias: gly residues. A compositionally biased stretch (low complexity) spans 332-345 (RARAAAGGARRSDT).

The protein localises to the membrane. The polypeptide is RING finger protein 228 (Homo sapiens (Human)).